Reading from the N-terminus, the 112-residue chain is cAMP-regulated phosphoprotein 19 (112 aa).

An N-acetylmethionine modification is found at M1. The segment covering 1–11 (MSAEVPEAASA) has biased composition (low complexity). Residues 1 to 49 (MSAEVPEAASAEEQKEMEDKVTSPEKAEEAKLKARYPHLGQKPGGSDFL) are disordered. Residue S2 is modified to N-acetylserine. Phosphoserine is present on residues S2 and S23. Residues 12 to 32 (EEQKEMEDKVTSPEKAEEAKL) show a composition bias toward basic and acidic residues. 2 positions are modified to phosphoserine; by GWL: S62 and S104. Residues 73-112 (KNKQLPTAAPDKTEVTGDHIPTPQDLPQRKPSLVASKLAG) are disordered. A Phosphoserine; by PKA modification is found at S104. K109 bears the N6-acetyllysine mark.

It belongs to the endosulfine family. In terms of assembly, interacts (when phosphorylated at Ser-62) with PPP2R2D. Interacts with SNCA. Interacts with PPP2R2A; the interaction is direct and this interaction inhibits PP2A activity. Post-translationally, phosphorylation at Ser-62 by MASTL/GWL during mitosis is essential for interaction with PPP2R2D (PR55-delta) and subsequent inactivation of PP2A. Phosphorylated by PKA.

It is found in the cytoplasm. Functionally, protein phosphatase inhibitor that specifically inhibits protein phosphatase 2A (PP2A) during mitosis. Inhibition of PP2A is enhanced when ARPP19 is phosphorylated. When phosphorylated at Ser-62 during mitosis, specifically interacts with PPP2R2D (PR55-delta) and inhibits its activity, leading to inactivation of PP2A, an essential condition to keep cyclin-B1-CDK1 activity high during M phase. May indirectly enhance GAP-43 expression. This chain is cAMP-regulated phosphoprotein 19 (ARPP19), found in Homo sapiens (Human).